Consider the following 479-residue polypeptide: uncharacterized protein (479 aa).

A run of 10 helical transmembrane segments spans residues Ile-11–Ile-31, Ile-43–Val-63, Gly-90–Leu-110, Ser-151–Glu-171, Ile-195–Gly-215, Trp-223–Tyr-243, Lys-274–His-294, Ile-295–Thr-315, Thr-328–Phe-348, and Trp-447–Met-467.

This sequence belongs to the SLC13A/DASS transporter (TC 2.A.47) family. DIT1 subfamily.

It is found in the cell inner membrane. This is an uncharacterized protein from Haemophilus influenzae (strain ATCC 51907 / DSM 11121 / KW20 / Rd).